The primary structure comprises 161 residues: ATP synthase subunit b (161 aa).

Residues 1-21 traverse the membrane as a helical segment; the sequence is MYLNATILGQVIAFILFVWFC.

It belongs to the ATPase B chain family. F-type ATPases have 2 components, F(1) - the catalytic core - and F(0) - the membrane proton channel. F(1) has five subunits: alpha(3), beta(3), gamma(1), delta(1), epsilon(1). F(0) has three main subunits: a(1), b(2) and c(10-14). The alpha and beta chains form an alternating ring which encloses part of the gamma chain. F(1) is attached to F(0) by a central stalk formed by the gamma and epsilon chains, while a peripheral stalk is formed by the delta and b chains.

It is found in the cell inner membrane. Its function is as follows. F(1)F(0) ATP synthase produces ATP from ADP in the presence of a proton or sodium gradient. F-type ATPases consist of two structural domains, F(1) containing the extramembraneous catalytic core and F(0) containing the membrane proton channel, linked together by a central stalk and a peripheral stalk. During catalysis, ATP synthesis in the catalytic domain of F(1) is coupled via a rotary mechanism of the central stalk subunits to proton translocation. Component of the F(0) channel, it forms part of the peripheral stalk, linking F(1) to F(0). This chain is ATP synthase subunit b, found in Blochmanniella floridana.